A 411-amino-acid polypeptide reads, in one-letter code: Putative metal tolerance protein C3 (411 aa).

Residues 1–115 (MEVNYCPETP…DRAERAAQEL (115 aa)) lie on the Cytoplasmic side of the membrane. A helical transmembrane segment spans residues 116–136 (AMQISNWANIFLLALKIYATV). At 137-140 (KSGS) the chain is on the vacuolar side. A helical transmembrane segment spans residues 141 to 161 (IAIAASTLDSLLDLMAGGILW). Over 162 to 184 (FTHLSMKNVNIYKYPIGKLRVQP) the chain is Cytoplasmic. The chain crosses the membrane as a helical span at residues 185–205 (VGIIIFAAVMATLGFQVLLVA). The Vacuolar portion of the chain corresponds to 206–222 (AEQLISNEPSEKMNHVQ). Residues 223–243 (LIWLYSIMLSATAIKLVLWIY) traverse the membrane as a helical segment. Over 244–262 (CKSSRNHIVRAYAKDHHFD) the chain is Cytoplasmic. A helical membrane pass occupies residues 263–283 (VVTNVLGLVAAVLANAFYWWL). Residues 284–287 (DPTG) lie on the Vacuolar side of the membrane. Residues 288 to 308 (AILLAIYTIVNWSGTVMENAV) form a helical membrane-spanning segment. Residues 309-390 (SLIGQSAPPE…LPEVERAFVH (82 aa)) are Cytoplasmic-facing.

Belongs to the cation diffusion facilitator (CDF) transporter (TC 2.A.4) family.

It is found in the vacuole membrane. Involved in sequestration of excess metal in the cytoplasm into vacuoles to maintain metal homeostasis. This is Putative metal tolerance protein C3 (MTPC3) from Arabidopsis thaliana (Mouse-ear cress).